A 248-amino-acid chain; its full sequence is Pathogenesis-related thaumatin-like protein 3.4 (248 aa).

An N-terminal signal peptide occupies residues 1–25 (MARAILWVLLTVMAVSLLLHAGVEG). 8 cysteine pairs are disulfide-bonded: C34–C227, C75–C85, C90–C96, C141–C216, C146–C199, C154–C164, C168–C177, and C178–C186. N-linked (GlcNAc...) asparagine glycosylation occurs at N235.

It belongs to the thaumatin family. In terms of tissue distribution, mainly expressed in male and female strobili, and, at lower levels, in roots of seedlings and saplings.

May be involved in disease resistance. This Cryptomeria japonica (Japanese cedar) protein is Pathogenesis-related thaumatin-like protein 3.4.